Reading from the N-terminus, the 505-residue chain is Maturase K (505 aa).

This sequence belongs to the intron maturase 2 family. MatK subfamily.

The protein localises to the plastid. Its subcellular location is the chloroplast. In terms of biological role, usually encoded in the trnK tRNA gene intron. Probably assists in splicing its own and other chloroplast group II introns. The chain is Maturase K from Ulmus parvifolia (Chinese elm).